Consider the following 131-residue polypeptide: Leptin receptor gene-related protein (131 aa).

4 consecutive transmembrane segments (helical) span residues 7–27 (LVAL…GCAL), 32–52 (VYWP…HFIA), 69–89 (LAYF…VILA), and 100–120 (GLVL…FLVF).

Belongs to the OB-RGRP/VPS55 family. Interacts with LEPR. Interacts with RAB13.

The protein resides in the golgi apparatus membrane. It is found in the endosome membrane. Negatively regulates leptin receptor (LEPR) cell surface expression, and thus decreases response to leptin/LEP. Negatively regulates growth hormone (GH) receptor cell surface expression in liver. May play a role in liver resistance to GH during periods of reduced nutrient availability. In Sus scrofa (Pig), this protein is Leptin receptor gene-related protein (LEPROT).